The sequence spans 557 residues: Dihydroxy-acid dehydratase (557 aa).

Residue Cys-50 participates in [2Fe-2S] cluster binding. Asp-82 contacts Mg(2+). Cys-123 is a binding site for [2Fe-2S] cluster. 2 residues coordinate Mg(2+): Asp-124 and Lys-125. Residue Lys-125 is modified to N6-carboxylysine. Cys-195 contributes to the [2Fe-2S] cluster binding site. Glu-447 is a Mg(2+) binding site. Ser-473 serves as the catalytic Proton acceptor.

This sequence belongs to the IlvD/Edd family. In terms of assembly, homodimer. Requires [2Fe-2S] cluster as cofactor. Mg(2+) is required as a cofactor.

The catalysed reaction is (2R)-2,3-dihydroxy-3-methylbutanoate = 3-methyl-2-oxobutanoate + H2O. The enzyme catalyses (2R,3R)-2,3-dihydroxy-3-methylpentanoate = (S)-3-methyl-2-oxopentanoate + H2O. It functions in the pathway amino-acid biosynthesis; L-isoleucine biosynthesis; L-isoleucine from 2-oxobutanoate: step 3/4. It participates in amino-acid biosynthesis; L-valine biosynthesis; L-valine from pyruvate: step 3/4. Its function is as follows. Functions in the biosynthesis of branched-chain amino acids. Catalyzes the dehydration of (2R,3R)-2,3-dihydroxy-3-methylpentanoate (2,3-dihydroxy-3-methylvalerate) into 2-oxo-3-methylpentanoate (2-oxo-3-methylvalerate) and of (2R)-2,3-dihydroxy-3-methylbutanoate (2,3-dihydroxyisovalerate) into 2-oxo-3-methylbutanoate (2-oxoisovalerate), the penultimate precursor to L-isoleucine and L-valine, respectively. This Ralstonia nicotianae (strain ATCC BAA-1114 / GMI1000) (Ralstonia solanacearum) protein is Dihydroxy-acid dehydratase.